Here is a 240-residue protein sequence, read N- to C-terminus: Uridylate kinase (240 aa).

Position 12–15 (12–15 (KLSG)) interacts with ATP. Residues 20–25 (GSQGFG) form an involved in allosteric activation by GTP region. Gly-54 is a binding site for UMP. 2 residues coordinate ATP: Gly-55 and Arg-59. UMP is bound by residues Asp-74 and 135 to 142 (TGNPYFST). ATP is bound by residues Tyr-168 and Asp-171.

This sequence belongs to the UMP kinase family. Homohexamer.

The protein localises to the cytoplasm. The catalysed reaction is UMP + ATP = UDP + ADP. It functions in the pathway pyrimidine metabolism; CTP biosynthesis via de novo pathway; UDP from UMP (UMPK route): step 1/1. With respect to regulation, allosterically activated by GTP. Inhibited by UTP. Functionally, catalyzes the reversible phosphorylation of UMP to UDP. In Desulfitobacterium hafniense (strain Y51), this protein is Uridylate kinase.